Here is a 192-residue protein sequence, read N- to C-terminus: Adenylate kinase (192 aa).

10–18 (GVPGVGSTT) is an ATP binding site.

It belongs to the archaeal adenylate kinase family. Monomer.

It localises to the cytoplasm. The catalysed reaction is AMP + ATP = 2 ADP. The protein is Adenylate kinase (adkA) of Methanocaldococcus jannaschii (strain ATCC 43067 / DSM 2661 / JAL-1 / JCM 10045 / NBRC 100440) (Methanococcus jannaschii).